The following is a 329-amino-acid chain: DNA-directed RNA polymerase subunit alpha (329 aa).

The segment at 1 to 233 is alpha N-terminal domain (alpha-NTD); the sequence is MVREKVKVST…NLFIPFLHVE (233 aa). The interval 266–329 is alpha C-terminal domain (alpha-CTD); the sequence is TKELAFQYIF…KKILDILEKK (64 aa).

Belongs to the RNA polymerase alpha chain family. In plastids the minimal PEP RNA polymerase catalytic core is composed of four subunits: alpha, beta, beta', and beta''. When a (nuclear-encoded) sigma factor is associated with the core the holoenzyme is formed, which can initiate transcription.

Its subcellular location is the plastid. The protein localises to the chloroplast. It carries out the reaction RNA(n) + a ribonucleoside 5'-triphosphate = RNA(n+1) + diphosphate. Functionally, DNA-dependent RNA polymerase catalyzes the transcription of DNA into RNA using the four ribonucleoside triphosphates as substrates. This Arabidopsis thaliana (Mouse-ear cress) protein is DNA-directed RNA polymerase subunit alpha.